A 172-amino-acid chain; its full sequence is Stellate protein CG33238 (172 aa).

Belongs to the casein kinase 2 subunit beta family. In terms of assembly, interacts in vitro with the casein kinase 2 alpha subunit (CkII-alpha). The relevance of such interaction is however unclear in vivo. As to expression, probably not expressed in wild-type flies. In males lacking the Y chromosome, it is testis-specific and constitutes the main component of star-shaped crystals.

Functionally, unknown. In males lacking the Y chromosome, its strong overexpression leads to the appearance of proteinaceous star-shaped crystals in the primary spermatocytes causing meiotic drive, possibly by interfering with normal casein kinase 2 activity. The chain is Stellate protein CG33238 (Ste:CG33238) from Drosophila melanogaster (Fruit fly).